We begin with the raw amino-acid sequence, 401 residues long: Probable 2,3-bisphosphoglycerate-independent phosphoglycerate mutase (401 aa).

Belongs to the BPG-independent phosphoglycerate mutase family. A-PGAM subfamily.

It carries out the reaction (2R)-2-phosphoglycerate = (2R)-3-phosphoglycerate. It functions in the pathway carbohydrate degradation; glycolysis; pyruvate from D-glyceraldehyde 3-phosphate: step 3/5. Its function is as follows. Catalyzes the interconversion of 2-phosphoglycerate and 3-phosphoglycerate. The protein is Probable 2,3-bisphosphoglycerate-independent phosphoglycerate mutase of Thermotoga neapolitana (strain ATCC 49049 / DSM 4359 / NBRC 107923 / NS-E).